The sequence spans 89 residues: Small ribosomal subunit protein uS15 (89 aa).

It belongs to the universal ribosomal protein uS15 family. As to quaternary structure, part of the 30S ribosomal subunit. Forms a bridge to the 50S subunit in the 70S ribosome, contacting the 23S rRNA.

Functionally, one of the primary rRNA binding proteins, it binds directly to 16S rRNA where it helps nucleate assembly of the platform of the 30S subunit by binding and bridging several RNA helices of the 16S rRNA. Its function is as follows. Forms an intersubunit bridge (bridge B4) with the 23S rRNA of the 50S subunit in the ribosome. This is Small ribosomal subunit protein uS15 from Gluconacetobacter diazotrophicus (strain ATCC 49037 / DSM 5601 / CCUG 37298 / CIP 103539 / LMG 7603 / PAl5).